The primary structure comprises 337 residues: Transaldolase (337 aa).

Positions 1–10 (MSGSPVKRQR) match the Nuclear localization signal motif. Lys-142 functions as the Schiff-base intermediate with substrate in the catalytic mechanism. Position 219 is an N6-acetyllysine (Lys-219). Phosphoserine is present on residues Ser-237 and Ser-256. N6-acetyllysine is present on residues Lys-269, Lys-286, and Lys-321.

Belongs to the transaldolase family. Type 1 subfamily. Homodimer. Interacts with KPNA1 and KPNA4.

Its subcellular location is the nucleus. The protein localises to the cytoplasm. The enzyme catalyses D-sedoheptulose 7-phosphate + D-glyceraldehyde 3-phosphate = D-erythrose 4-phosphate + beta-D-fructose 6-phosphate. The protein operates within carbohydrate degradation; pentose phosphate pathway; D-glyceraldehyde 3-phosphate and beta-D-fructose 6-phosphate from D-ribose 5-phosphate and D-xylulose 5-phosphate (non-oxidative stage): step 2/3. In terms of biological role, catalyzes the rate-limiting step of the non-oxidative phase in the pentose phosphate pathway. Catalyzes the reversible conversion of sedheptulose-7-phosphate and D-glyceraldehyde 3-phosphate into erythrose-4-phosphate and beta-D-fructose 6-phosphate. The chain is Transaldolase (TALDO1) from Sus scrofa (Pig).